We begin with the raw amino-acid sequence, 330 residues long: DNA-directed RNA polymerase subunit alpha (330 aa).

An alpha N-terminal domain (alpha-NTD) region spans residues 1 to 236; sequence MQGSVTEFLK…EQLDAFVDLR (236 aa). The tract at residues 250–330 is alpha C-terminal domain (alpha-CTD); sequence FDPILLRPVD…NWPPASIAED (81 aa).

This sequence belongs to the RNA polymerase alpha chain family. In terms of assembly, homodimer. The RNAP catalytic core consists of 2 alpha, 1 beta, 1 beta' and 1 omega subunit. When a sigma factor is associated with the core the holoenzyme is formed, which can initiate transcription.

It catalyses the reaction RNA(n) + a ribonucleoside 5'-triphosphate = RNA(n+1) + diphosphate. Functionally, DNA-dependent RNA polymerase catalyzes the transcription of DNA into RNA using the four ribonucleoside triphosphates as substrates. The chain is DNA-directed RNA polymerase subunit alpha from Vibrio parahaemolyticus serotype O3:K6 (strain RIMD 2210633).